The chain runs to 112 residues: Seminal vesicle secretory protein 4 (112 aa).

The N-terminal stretch at 1-21 (MKSTSLFLCSLLLLLVTGAIG) is a signal peptide. Residues 26-112 (EKYSQSEEVV…RSRFAQDVLN (87 aa)) are disordered. Low complexity-rich tracts occupy residues 36–47 (SESFASGPSSGS) and 85–97 (RSSG…GESS).

Belongs to the SVP2/SVP5/SVP6 family. As to expression, testis.

It is found in the secreted. The protein localises to the extracellular space. The sequence is that of Seminal vesicle secretory protein 4 (Svs4) from Rattus norvegicus (Rat).